The sequence spans 443 residues: Leucine-rich repeat-containing protein 17 (443 aa).

The first 15 residues, 1–15 (MRIVAILLLFCLCRA), serve as a signal peptide directing secretion. Residues 20–48 (KSSPGVLRSQGNPSRSHGRGGRRGSSPVK) form a disordered region. LRR repeat units follow at residues 84–105 (DLLH…MFAK), 108–129 (RLKS…AFFG), and 132–153 (KLTT…AFIY). One can recognise an LRRCT 1 domain in the interval 165–216 (NPWHCTCELETLISMLQIPRNRNLGNYAKCGSPPALRNKKLLQLKPQELCDE). Residues 229 to 270 (SGIPAVIRPEADSTLCHNYVFPIQTLDCKRKELKKVPSNIPP) enclose the LRRNT domain. LRR repeat units lie at residues 271-292 (DIVK…EFED), 295-316 (ELKK…AFLG), and 319-342 (HLEE…EDLY). The region spanning 352–404 (NPWRCDYSIHYLYYWLKHHYNVHYNGLECKTPEEYKGWSVGKYVRSYYEECPK) is the LRRCT 2 domain.

Expressed in osteoblasts, spleen, lung and heart.

Its subcellular location is the secreted. It localises to the extracellular space. Functionally, involved in bone homeostasis. Acts as a negative regulator of RANKL-induced osteoclast precursor differentiation from bone marrow precursors. The polypeptide is Leucine-rich repeat-containing protein 17 (Lrrc17) (Mus musculus (Mouse)).